The chain runs to 343 residues: MQFIDHATICVKAGDGGDGIVAFRREKYVPAGGPSGGNGGRGGSVILVATEQLQTLLDFRYLRLFKAQDGERGGPKGMTGASADDLIIQVPCGTAVYDAETDECLGDLTSAGQTLQVAQGGKGGLGNQHFLSNSNRAPEHALPGLPGEERQLRLELKLLAEVGLIGLPNAGKSMLISVLSAAKPKIADYPFTTLVPNLGVVRRETGDGTVFADIPGLIEGAHRGAGLGHDFLRHIERTRLLIHLVDLTAEDPIADWRTIQAELKAYGRGLSDRPQILALNKIDAVLDEDLSFWQAEFQALTPVPLLCISSADRRGLDALLRLVWQWLDELDAAAELSETRVLN.

Residues 1–159 (MQFIDHATIC…RQLRLELKLL (159 aa)) enclose the Obg domain. Residues 160–328 (AEVGLIGLPN…LLRLVWQWLD (169 aa)) form the OBG-type G domain. GTP-binding positions include 166–173 (GLPNAGKS), 191–195 (FTTLV), 213–216 (DIPG), 280–283 (NKID), and 309–311 (SSA). The Mg(2+) site is built by serine 173 and threonine 193.

The protein belongs to the TRAFAC class OBG-HflX-like GTPase superfamily. OBG GTPase family. As to quaternary structure, monomer. Requires Mg(2+) as cofactor.

The protein resides in the cytoplasm. Its function is as follows. An essential GTPase which binds GTP, GDP and possibly (p)ppGpp with moderate affinity, with high nucleotide exchange rates and a fairly low GTP hydrolysis rate. Plays a role in control of the cell cycle, stress response, ribosome biogenesis and in those bacteria that undergo differentiation, in morphogenesis control. The chain is GTPase Obg from Synechococcus elongatus (strain ATCC 33912 / PCC 7942 / FACHB-805) (Anacystis nidulans R2).